Consider the following 330-residue polypeptide: Stomatin-1 (330 aa).

A compositionally biased stretch (polar residues) spans 1 to 19 (MQPSETVEMQEMAQPSGQQ). The disordered stretch occupies residues 1–27 (MQPSETVEMQEMAQPSGQQRDVEARVQ). Residues 42 to 62 (MFCIAMSYVLIFLTFPVSVFM) traverse the membrane as a helical segment.

Belongs to the band 7/mec-2 family.

Its subcellular location is the membrane. The chain is Stomatin-1 (sto-1) from Caenorhabditis elegans.